We begin with the raw amino-acid sequence, 255 residues long: UPF0246 protein BVU_0413 (255 aa).

It belongs to the UPF0246 family.

This Phocaeicola vulgatus (strain ATCC 8482 / DSM 1447 / JCM 5826 / CCUG 4940 / NBRC 14291 / NCTC 11154) (Bacteroides vulgatus) protein is UPF0246 protein BVU_0413.